Here is a 158-residue protein sequence, read N- to C-terminus: Cyclic pyranopterin monophosphate synthase (158 aa).

Residues 73 to 75 and 110 to 111 each bind substrate; these read LCH and ME. The active site involves Asp125.

It belongs to the MoaC family. As to quaternary structure, homohexamer; trimer of dimers.

It carries out the reaction (8S)-3',8-cyclo-7,8-dihydroguanosine 5'-triphosphate = cyclic pyranopterin phosphate + diphosphate. It participates in cofactor biosynthesis; molybdopterin biosynthesis. In terms of biological role, catalyzes the conversion of (8S)-3',8-cyclo-7,8-dihydroguanosine 5'-triphosphate to cyclic pyranopterin monophosphate (cPMP). The protein is Cyclic pyranopterin monophosphate synthase of Azotobacter vinelandii (strain DJ / ATCC BAA-1303).